We begin with the raw amino-acid sequence, 350 residues long: Probable galactose-1-phosphate uridylyltransferase (350 aa).

A disordered region spans residues 31 to 52 (PWSGQQEKAQKNELPEFDPTNP). Position 54 (Cys54) interacts with Zn(2+). UDP-alpha-D-glucose-binding positions include 76–77 (ND) and Asn152. His163 contributes to the Zn(2+) binding site. His165 serves as the catalytic Tele-UMP-histidine intermediate. UDP-alpha-D-glucose contacts are provided by residues Gln167, 314 to 317 (KFMV), and 319 to 320 (FE).

The protein belongs to the galactose-1-phosphate uridylyltransferase type 1 family. Homodimer. Zn(2+) serves as cofactor.

The catalysed reaction is alpha-D-galactose 1-phosphate + UDP-alpha-D-glucose = alpha-D-glucose 1-phosphate + UDP-alpha-D-galactose. It functions in the pathway carbohydrate metabolism; galactose metabolism. The sequence is that of Probable galactose-1-phosphate uridylyltransferase (Galt) from Drosophila melanogaster (Fruit fly).